The primary structure comprises 340 residues: Dihydroorotate dehydrogenase (quinone) (340 aa).

FMN-binding positions include Ala-67–Lys-71 and Thr-91. Lys-71 lines the substrate pocket. Asn-116 to Phe-120 contacts substrate. Residues Asn-143 and Asn-176 each coordinate FMN. Asn-176 provides a ligand contact to substrate. Ser-179 acts as the Nucleophile in catalysis. Asn-181 lines the substrate pocket. Lys-217 and Thr-245 together coordinate FMN. Asn-246 to Thr-247 contacts substrate. FMN is bound by residues Gly-267, Gly-296, and Tyr-317 to Thr-318.

It belongs to the dihydroorotate dehydrogenase family. Type 2 subfamily. Monomer. It depends on FMN as a cofactor.

It localises to the cell membrane. The catalysed reaction is (S)-dihydroorotate + a quinone = orotate + a quinol. It participates in pyrimidine metabolism; UMP biosynthesis via de novo pathway; orotate from (S)-dihydroorotate (quinone route): step 1/1. Functionally, catalyzes the conversion of dihydroorotate to orotate with quinone as electron acceptor. The polypeptide is Dihydroorotate dehydrogenase (quinone) (Christiangramia forsetii (strain DSM 17595 / CGMCC 1.15422 / KT0803) (Gramella forsetii)).